Here is a 298-residue protein sequence, read N- to C-terminus: GTPase Era (298 aa).

The Era-type G domain occupies 3 to 170 (KSGFVAILGR…IKLLTDNLEE (168 aa)). A G1 region spans residues 11-18 (GRPNVGKS). 11 to 18 (GRPNVGKS) is a binding site for GTP. The segment at 37 to 41 (QTTRN) is G2. Positions 58–61 (DTPG) are G3. GTP is bound by residues 58-62 (DTPGI) and 120-123 (NKID). The tract at residues 120–123 (NKID) is G4. Residues 149–151 (ISA) are G5. A KH type-2 domain is found at 201 to 279 (TQQEVPHSVA…YLETWVKVKK (79 aa)).

Belongs to the TRAFAC class TrmE-Era-EngA-EngB-Septin-like GTPase superfamily. Era GTPase family. In terms of assembly, monomer.

It is found in the cytoplasm. Its subcellular location is the cell membrane. Its function is as follows. An essential GTPase that binds both GDP and GTP, with rapid nucleotide exchange. Plays a role in 16S rRNA processing and 30S ribosomal subunit biogenesis and possibly also in cell cycle regulation and energy metabolism. The sequence is that of GTPase Era from Streptococcus pyogenes serotype M3 (strain ATCC BAA-595 / MGAS315).